The following is a 121-amino-acid chain: Phosphoribosyl-AMP cyclohydrolase (121 aa).

Asp-76 contacts Mg(2+). A Zn(2+)-binding site is contributed by Cys-77. 2 residues coordinate Mg(2+): Asp-78 and Asp-80. Cys-93 and Cys-100 together coordinate Zn(2+).

Belongs to the PRA-CH family. In terms of assembly, homodimer. Mg(2+) is required as a cofactor. Requires Zn(2+) as cofactor.

The protein localises to the cytoplasm. It carries out the reaction 1-(5-phospho-beta-D-ribosyl)-5'-AMP + H2O = 1-(5-phospho-beta-D-ribosyl)-5-[(5-phospho-beta-D-ribosylamino)methylideneamino]imidazole-4-carboxamide. It participates in amino-acid biosynthesis; L-histidine biosynthesis; L-histidine from 5-phospho-alpha-D-ribose 1-diphosphate: step 3/9. In terms of biological role, catalyzes the hydrolysis of the adenine ring of phosphoribosyl-AMP. In Paracoccus denitrificans (strain Pd 1222), this protein is Phosphoribosyl-AMP cyclohydrolase.